Consider the following 313-residue polypeptide: BTB/POZ domain-containing adapter for CUL3-mediated RhoA degradation protein 3 (313 aa).

Met-1 bears the N-acetylmethionine mark. Ser-23 is subject to Phosphoserine. The 69-residue stretch at 32-100 (KYVKLNVGGA…LRDGAVPLPE (69 aa)) folds into the BTB domain. Residues 239-245 (QTKVEFP) carry the PCNA-binding motif.

This sequence belongs to the BACURD family. Homotetramer; forms a two-fold symmetric tetramer in solution. Interacts with CUL3; interaction is direct and forms a 5:5 heterodecamer. Component of the BCR(BACURD3) E3 ubiquitin ligase complex, at least composed of CUL3, KCTD10/BACURD3 and RBX1. Interacts with DNA polymerase delta subunit 2/POLD2. Interacts with PCNA.

Its subcellular location is the nucleus. It functions in the pathway protein modification; protein ubiquitination. In terms of biological role, substrate-specific adapter of a BCR (BTB-CUL3-RBX1) E3 ubiquitin-protein ligase complex. The BCR(BACURD3) E3 ubiquitin ligase complex mediates the ubiquitination of target proteins, leading to their degradation by the proteasome. The sequence is that of BTB/POZ domain-containing adapter for CUL3-mediated RhoA degradation protein 3 (KCTD10) from Homo sapiens (Human).